A 623-amino-acid chain; its full sequence is Oviduct-specific glycoprotein (623 aa).

The signal sequence occupies residues 1 to 21 (MWKLLLWVGLVLVLKHHDGAA). The 364-residue stretch at 22–385 (HKLVCYFTNW…YVMNDILVRA (364 aa)) folds into the GH18 domain. The cysteines at positions 26 and 51 are disulfide-linked. Residues 71–72 (LQ), 98–101 (GGWN), Tyr142, 211–214 (LSYD), and Trp355 each bind chitin. N-linked (GlcNAc...) asparagine glycans are attached at residues Asn402 and Asn441. Disordered regions lie at residues 539 to 558 (LTPV…VSPG) and 594 to 623 (RKIS…PQDG). The span at 613-623 (TSETGTHPQDG) shows a compositional bias: polar residues.

Belongs to the glycosyl hydrolase 18 family. As to expression, oviduct.

The protein localises to the cytoplasmic vesicle. The protein resides in the secretory vesicle. Its function is as follows. Binds to oocyte zona pellucida in vivo. May play a role in the fertilization process and/or early embryonic development. The protein is Oviduct-specific glycoprotein (OVGP1) of Papio anubis (Olive baboon).